A 393-amino-acid chain; its full sequence is MIKYEIPKSRPNEFSKVLPLVEQILNQVKERGDKALLELEEKYDKAKLDSLVENRIDELASKIPEEYKAAIDRIYDQLVEFHKTTLPYMVGGGYNGIEFGILWRAIEKVGIYVPGGLKSYPSTLLMAAIPARVAGVSEIYVATPPNRIDSVIAYIAKKLKINALYRIGGAQAIAALAYGTESVKKVDKIVGPGNIFVQASKFLVSKDVAIDGIEGPTELVVIADSSADYRHVILDMRAQAEHGSTSYIILVTTSDFLIDKVREELDKEEFTYYIVKVKSIDEAIDVANDIAPEHLSLFVNDPKSYLHKIKNAGAISLGKTPPALIDYAAGPDHILPTNAWSRVRGGLTVYDFLKPISYANSVNPDKELVNMAKLIAEYEGFIYHSKSIGARYE.

Residues Tyr-112, Gln-171, and Asn-194 each contribute to the NAD(+) site. Residues Thr-217, Gln-239, and His-242 each coordinate substrate. Zn(2+) is bound by residues Gln-239 and His-242. Active-site proton acceptor residues include Glu-293 and His-294. Substrate-binding residues include His-294, Asp-326, Glu-379, and His-384. Asp-326 serves as a coordination point for Zn(2+). His-384 serves as a coordination point for Zn(2+).

This sequence belongs to the histidinol dehydrogenase family. Requires Zn(2+) as cofactor.

It catalyses the reaction L-histidinol + 2 NAD(+) + H2O = L-histidine + 2 NADH + 3 H(+). The protein operates within amino-acid biosynthesis; L-histidine biosynthesis; L-histidine from 5-phospho-alpha-D-ribose 1-diphosphate: step 9/9. In terms of biological role, catalyzes the sequential NAD-dependent oxidations of L-histidinol to L-histidinaldehyde and then to L-histidine. The sequence is that of Histidinol dehydrogenase from Sulfolobus acidocaldarius (strain ATCC 33909 / DSM 639 / JCM 8929 / NBRC 15157 / NCIMB 11770).